The following is a 347-amino-acid chain: F-box/kelch-repeat protein At5g03020 (347 aa).

A disordered region spans residues 1 to 21 (MTEEMSKESPPPPPTSFSSLP). An F-box domain is found at 14–62 (PTSFSSLPDDVALDCRARISRFHYPTLSLVSKGFRTLIASPELEATRSF). 2 Kelch repeats span residues 119-165 (QIYI…VIDG) and 167-215 (IYVI…KKKH).

This is F-box/kelch-repeat protein At5g03020 from Arabidopsis thaliana (Mouse-ear cress).